The sequence spans 487 residues: Betaine aldehyde dehydrogenase (487 aa).

Ile27 and Asp93 together coordinate K(+). 149-151 (GAW) is a binding site for NAD(+). Residue Lys161 is the Charge relay system of the active site. NAD(+)-binding positions include 175–178 (KPSE) and 228–231 (SVPT). Leu243 provides a ligand contact to K(+). The Proton acceptor role is filled by Glu249. Gly251, Cys283, and Glu384 together coordinate NAD(+). The Nucleophile role is filled by Cys283. Residue Cys283 is modified to Cysteine sulfenic acid (-SOH). The K(+) site is built by Lys454 and Gly457. Glu461 functions as the Charge relay system in the catalytic mechanism.

The protein belongs to the aldehyde dehydrogenase family. Dimer of dimers. The cofactor is K(+).

The enzyme catalyses betaine aldehyde + NAD(+) + H2O = glycine betaine + NADH + 2 H(+). It participates in amine and polyamine biosynthesis; betaine biosynthesis via choline pathway; betaine from betaine aldehyde: step 1/1. In terms of biological role, involved in the biosynthesis of the osmoprotectant glycine betaine. Catalyzes the irreversible oxidation of betaine aldehyde to the corresponding acid. The protein is Betaine aldehyde dehydrogenase of Brucella abortus (strain S19).